Consider the following 429-residue polypeptide: Glutamate-1-semialdehyde 2,1-aminomutase 1 (429 aa).

An N6-(pyridoxal phosphate)lysine modification is found at Lys268.

Belongs to the class-III pyridoxal-phosphate-dependent aminotransferase family. HemL subfamily. As to quaternary structure, homodimer. The cofactor is pyridoxal 5'-phosphate.

The protein localises to the cytoplasm. The enzyme catalyses (S)-4-amino-5-oxopentanoate = 5-aminolevulinate. It functions in the pathway porphyrin-containing compound metabolism; protoporphyrin-IX biosynthesis; 5-aminolevulinate from L-glutamyl-tRNA(Glu): step 2/2. In Staphylococcus saprophyticus subsp. saprophyticus (strain ATCC 15305 / DSM 20229 / NCIMB 8711 / NCTC 7292 / S-41), this protein is Glutamate-1-semialdehyde 2,1-aminomutase 1.